The chain runs to 141 residues: Nucleoside diphosphate kinase (141 aa).

ATP-binding residues include Lys-9, Phe-57, Arg-85, Thr-91, Arg-102, and Asn-112. The Pros-phosphohistidine intermediate role is filled by His-115.

Belongs to the NDK family. Homotetramer. The cofactor is Mg(2+).

Its subcellular location is the cytoplasm. It carries out the reaction a 2'-deoxyribonucleoside 5'-diphosphate + ATP = a 2'-deoxyribonucleoside 5'-triphosphate + ADP. The catalysed reaction is a ribonucleoside 5'-diphosphate + ATP = a ribonucleoside 5'-triphosphate + ADP. In terms of biological role, major role in the synthesis of nucleoside triphosphates other than ATP. The ATP gamma phosphate is transferred to the NDP beta phosphate via a ping-pong mechanism, using a phosphorylated active-site intermediate. This is Nucleoside diphosphate kinase from Chlamydia muridarum (strain MoPn / Nigg).